A 294-amino-acid polypeptide reads, in one-letter code: 33 kDa chaperonin (294 aa).

Cystine bridges form between Cys-238–Cys-240 and Cys-271–Cys-274.

The protein belongs to the HSP33 family. Post-translationally, under oxidizing conditions two disulfide bonds are formed involving the reactive cysteines. Under reducing conditions zinc is bound to the reactive cysteines and the protein is inactive.

The protein resides in the cytoplasm. Its function is as follows. Redox regulated molecular chaperone. Protects both thermally unfolding and oxidatively damaged proteins from irreversible aggregation. Plays an important role in the bacterial defense system toward oxidative stress. The chain is 33 kDa chaperonin from Clostridium novyi (strain NT).